The sequence spans 347 residues: Protein-glutamate methylesterase/protein-glutamine glutaminase 1 (347 aa).

The 118-residue stretch at 6-123 (RVLVVDDSAT…LRPFGDLAEK (118 aa)) folds into the Response regulatory domain. Aspartate 57 is modified (4-aspartylphosphate). One can recognise a CheB-type methylesterase domain in the interval 150 to 342 (FRVGRKIVAI…EEILKMTAAR (193 aa)). Active-site residues include serine 162, histidine 188, and aspartate 284.

This sequence belongs to the CheB family. Phosphorylated by CheA. Phosphorylation of the N-terminal regulatory domain activates the methylesterase activity.

It is found in the cytoplasm. The enzyme catalyses [protein]-L-glutamate 5-O-methyl ester + H2O = L-glutamyl-[protein] + methanol + H(+). It carries out the reaction L-glutaminyl-[protein] + H2O = L-glutamyl-[protein] + NH4(+). Involved in chemotaxis. Part of a chemotaxis signal transduction system that modulates chemotaxis in response to various stimuli. Catalyzes the demethylation of specific methylglutamate residues introduced into the chemoreceptors (methyl-accepting chemotaxis proteins or MCP) by CheR. Also mediates the irreversible deamidation of specific glutamine residues to glutamic acid. This chain is Protein-glutamate methylesterase/protein-glutamine glutaminase 1, found in Rhizobium johnstonii (strain DSM 114642 / LMG 32736 / 3841) (Rhizobium leguminosarum bv. viciae).